The sequence spans 292 residues: 4-hydroxy-tetrahydrodipicolinate synthase (292 aa).

Residue threonine 45 participates in pyruvate binding. Tyrosine 133 acts as the Proton donor/acceptor in catalysis. Lysine 161 functions as the Schiff-base intermediate with substrate in the catalytic mechanism. Isoleucine 203 contributes to the pyruvate binding site.

Belongs to the DapA family. As to quaternary structure, homotetramer; dimer of dimers.

It is found in the cytoplasm. The enzyme catalyses L-aspartate 4-semialdehyde + pyruvate = (2S,4S)-4-hydroxy-2,3,4,5-tetrahydrodipicolinate + H2O + H(+). The protein operates within amino-acid biosynthesis; L-lysine biosynthesis via DAP pathway; (S)-tetrahydrodipicolinate from L-aspartate: step 3/4. Catalyzes the condensation of (S)-aspartate-beta-semialdehyde [(S)-ASA] and pyruvate to 4-hydroxy-tetrahydrodipicolinate (HTPA). The protein is 4-hydroxy-tetrahydrodipicolinate synthase of Shigella flexneri.